We begin with the raw amino-acid sequence, 513 residues long: Ribonuclease Y (513 aa).

The chain crosses the membrane as a helical span at residues 6–26; the sequence is YIIIAVVIIIICVILGLYIVD. The KH domain occupies 203–288; that stretch reads TVHVVNLPND…EMVEKAKKEV (86 aa). The 94-residue stretch at 329 to 422 folds into the HD domain; the sequence is VLKHSIEVSH…VQAADAISAA (94 aa).

Belongs to the RNase Y family.

Its subcellular location is the cell membrane. Endoribonuclease that initiates mRNA decay. The protein is Ribonuclease Y of Clostridium botulinum (strain ATCC 19397 / Type A).